The chain runs to 407 residues: MTSPIHVTSEIGKLKTVMLHRPGREIENITPDYMERLLFDDIPYLPIAQEEHDFFAQTLRDQGIEVLYFEKLAAEALASDDVRKEFLNRMIAESGYVAGTTHDALYDYLYQMTPQEMVDKIIEGVRGTDIDIAQPDLQSVSENTDWPFLMDPMPNAYFTRDPQASIGDGISINKMTFPARQRESLITEYIINHHPRFAGQVEVWRDRNHESHIEGGDELVLSDHVLAIGVSQRTTADAIEDIARNLFKDSNYDTVIAISIPHNHAMMHLDTVFTMINHDQFTVHPAILDDKGEVDNWVLHPGKDGEITIEHHTDIKAVLKQALNKPEIDLIPTGNGDPIVAPREQWNDGSNTLAIAPGEVVTYNRNYVSNALLKEHGILVHEVRSSELSRGRGGPRCMSCPIVREDL.

Cys397 functions as the Amidino-cysteine intermediate in the catalytic mechanism.

Belongs to the arginine deiminase family.

It is found in the cytoplasm. The enzyme catalyses L-arginine + H2O = L-citrulline + NH4(+). Its pathway is amino-acid degradation; L-arginine degradation via ADI pathway; carbamoyl phosphate from L-arginine: step 1/2. The protein is Arginine deiminase of Limosilactobacillus fermentum (strain NBRC 3956 / LMG 18251) (Lactobacillus fermentum).